A 185-amino-acid polypeptide reads, in one-letter code: Ribosome-recycling factor (185 aa).

This sequence belongs to the RRF family.

Its subcellular location is the cytoplasm. Its function is as follows. Responsible for the release of ribosomes from messenger RNA at the termination of protein biosynthesis. May increase the efficiency of translation by recycling ribosomes from one round of translation to another. The chain is Ribosome-recycling factor from Neisseria meningitidis serogroup A / serotype 4A (strain DSM 15465 / Z2491).